Reading from the N-terminus, the 292-residue chain is WRKY transcription factor 55 (292 aa).

Residues 133–155 (VERSGASGSSTPRQRRRKDEGEE) form a disordered region. Positions 167-235 (NTDLPPDDNH…YRGSHTCYNS (69 aa)) form a DNA-binding region, WRKY.

Belongs to the WRKY group III family.

The protein localises to the nucleus. Its function is as follows. Transcription factor. Interacts specifically with the W box (5'-(T)TGAC[CT]-3'), a frequently occurring elicitor-responsive cis-acting element. This Arabidopsis thaliana (Mouse-ear cress) protein is WRKY transcription factor 55 (WRKY55).